A 984-amino-acid polypeptide reads, in one-letter code: Probable beta-galactosidase C (984 aa).

Positions 1–23 (MRLLSFIYLVWLALLTGTPQVSA) are cleaved as a signal peptide. 5 residues coordinate substrate: tyrosine 82, asparagine 127, alanine 128, glutamate 129, and asparagine 187. Glutamate 188 functions as the Proton donor in the catalytic mechanism. The N-linked (GlcNAc...) asparagine glycan is linked to asparagine 197. Tyrosine 251 contacts substrate. The cysteines at positions 257 and 304 are disulfide-linked. A glycan (N-linked (GlcNAc...) asparagine) is linked at asparagine 276. Residue glutamate 287 is the Nucleophile of the active site. Tyrosine 353 lines the substrate pocket. N-linked (GlcNAc...) asparagine glycosylation is found at asparagine 391, asparagine 421, asparagine 434, asparagine 517, asparagine 602, asparagine 677, asparagine 715, asparagine 720, asparagine 759, and asparagine 805.

The protein belongs to the glycosyl hydrolase 35 family.

The protein localises to the secreted. It carries out the reaction Hydrolysis of terminal non-reducing beta-D-galactose residues in beta-D-galactosides.. Cleaves beta-linked terminal galactosyl residues from gangliosides, glycoproteins, and glycosaminoglycans. The sequence is that of Probable beta-galactosidase C (lacC) from Aspergillus oryzae (strain ATCC 42149 / RIB 40) (Yellow koji mold).